We begin with the raw amino-acid sequence, 89 residues long: Small ribosomal subunit protein uS15 (89 aa).

Belongs to the universal ribosomal protein uS15 family. As to quaternary structure, part of the 30S ribosomal subunit. Forms a bridge to the 50S subunit in the 70S ribosome, contacting the 23S rRNA.

Its function is as follows. One of the primary rRNA binding proteins, it binds directly to 16S rRNA where it helps nucleate assembly of the platform of the 30S subunit by binding and bridging several RNA helices of the 16S rRNA. Functionally, forms an intersubunit bridge (bridge B4) with the 23S rRNA of the 50S subunit in the ribosome. The polypeptide is Small ribosomal subunit protein uS15 (Marinobacter nauticus (strain ATCC 700491 / DSM 11845 / VT8) (Marinobacter aquaeolei)).